Consider the following 581-residue polypeptide: Arginine--tRNA ligase (581 aa).

The 'HIGH' region signature appears at 123–133 (PNVAKEMHVGH).

This sequence belongs to the class-I aminoacyl-tRNA synthetase family. As to quaternary structure, monomer.

It localises to the cytoplasm. It carries out the reaction tRNA(Arg) + L-arginine + ATP = L-arginyl-tRNA(Arg) + AMP + diphosphate. In Blochmanniella pennsylvanica (strain BPEN), this protein is Arginine--tRNA ligase.